A 322-amino-acid polypeptide reads, in one-letter code: Coelomocyte uptake defective protein 15 (322 aa).

The N-terminal stretch at 1–20 (MVNSLSRILFCSLLIFSVIS) is a signal peptide. Asn62, Asn98, Asn144, Asn170, Asn180, Asn183, and Asn222 each carry an N-linked (GlcNAc...) asparagine glycan. The chain crosses the membrane as a helical span at residues 244 to 264 (LFGIMITFGTLLLLTALFYAA).

The protein belongs to the OSTM1 family.

Its subcellular location is the membrane. Modulates the transport of substances from the endosomal to lysosomal compartments. Plays a role in lysosome formation and function in coelomocytes. This is Coelomocyte uptake defective protein 15 from Caenorhabditis elegans.